The following is a 158-amino-acid chain: 2-C-methyl-D-erythritol 2,4-cyclodiphosphate synthase (158 aa).

Residues Asp-9 and His-11 each coordinate a divalent metal cation. 4-CDP-2-C-methyl-D-erythritol 2-phosphate-binding positions include Asp-9 to His-11 and His-35 to Ser-36. His-43 contributes to the a divalent metal cation binding site. Residues Asp-57–Gly-59, Phe-62–Asp-66, Ala-101–Ala-107, Thr-133–Glu-136, Phe-140, and Arg-143 each bind 4-CDP-2-C-methyl-D-erythritol 2-phosphate.

This sequence belongs to the IspF family. As to quaternary structure, homotrimer. A divalent metal cation is required as a cofactor.

It carries out the reaction 4-CDP-2-C-methyl-D-erythritol 2-phosphate = 2-C-methyl-D-erythritol 2,4-cyclic diphosphate + CMP. Its pathway is isoprenoid biosynthesis; isopentenyl diphosphate biosynthesis via DXP pathway; isopentenyl diphosphate from 1-deoxy-D-xylulose 5-phosphate: step 4/6. Functionally, involved in the biosynthesis of isopentenyl diphosphate (IPP) and dimethylallyl diphosphate (DMAPP), two major building blocks of isoprenoid compounds. Catalyzes the conversion of 4-diphosphocytidyl-2-C-methyl-D-erythritol 2-phosphate (CDP-ME2P) to 2-C-methyl-D-erythritol 2,4-cyclodiphosphate (ME-CPP) with a corresponding release of cytidine 5-monophosphate (CMP). The polypeptide is 2-C-methyl-D-erythritol 2,4-cyclodiphosphate synthase (Bacillus velezensis (strain DSM 23117 / BGSC 10A6 / LMG 26770 / FZB42) (Bacillus amyloliquefaciens subsp. plantarum)).